Reading from the N-terminus, the 483-residue chain is MPTMGALHAGHGTVIRAASAMGPVLVSVFVNPLQFGPDEDLARYPRSLESDLVVAERWGAAALWAPSVEQIYPQGGERHPSTIQVPPGLQKHLCGAARPGHFDGVVTVVARLLDLVRPRQLWLGEKDWQQLVILRWLVAHLARPVIVQGVATVREADGLALSSRNQYLSPDQRRMAAALPEALHAARGDGSDPIPALRGSLSDAGFEVEYVQRVDPCTLQPCGDETAISLLAAAVRCGSTRLIDHAFLMTRQPLVAIDGPAGAGKSTVTRAFAERLGLVYLDTGAMYRSVTWLVLERGVNPSDGVAIEPLLKDLDVQLQSLPGGVQQVLVNGEDVSSAIRSPDVTASVSAVAAHRCVRQALTVQQKSMGSKGGLVAEGRDIGTAVFPHADLKVFLTATVTERARRRALDLEQRGFAVPERAELEAQIAERDRLDSTREEAPLMQADDAIELVTDGMDIDAVIEALVRLFRERVAEEAWPTPQR.

Residues 1-246 (MPTMGALHAG…CGSTRLIDHA (246 aa)) are pantoate--beta-alanine ligase. ATP is bound at residue 4–11 (MGALHAGH). The Proton donor role is filled by His11. Gln34 is a binding site for (R)-pantoate. Gln34 is a beta-alanine binding site. 124 to 127 (GEKD) contacts ATP. Gln130 is a (R)-pantoate binding site. ATP contacts are provided by residues Val153 and 161–164 (LSSR). Positions 247–483 (FLMTRQPLVA…AEEAWPTPQR (237 aa)) are cytidylate kinase.

The protein in the N-terminal section; belongs to the pantothenate synthetase family. In the C-terminal section; belongs to the cytidylate kinase family. Type 1 subfamily.

The protein resides in the cytoplasm. It carries out the reaction (R)-pantoate + beta-alanine + ATP = (R)-pantothenate + AMP + diphosphate + H(+). The catalysed reaction is CMP + ATP = CDP + ADP. It catalyses the reaction dCMP + ATP = dCDP + ADP. It functions in the pathway cofactor biosynthesis; (R)-pantothenate biosynthesis; (R)-pantothenate from (R)-pantoate and beta-alanine: step 1/1. Functionally, catalyzes the condensation of pantoate with beta-alanine in an ATP-dependent reaction via a pantoyl-adenylate intermediate. Catalyzes the transfer of a phosphate group from ATP to either CMP or dCMP to form CDP or dCDP and ADP, respectively. The chain is Bifunctional pantoate ligase/cytidylate kinase from Synechococcus sp. (strain CC9902).